Here is a 951-residue protein sequence, read N- to C-terminus: MANDKIVIHGARAHNLKDIDVTIPRDKLVVITGLSGSGKSSLAFDTLYAEGQRRYVESLSAYARQFLGQMQKPDVDSIDGLSPAISIDQKTTSKNPRSTVGTVTEINDYLRLLWARVGEPICPNDGTPIASQTVEQMVDRIQKLPERTKLQILSPIVRQKKGEHKKIFEKIKREGFVRVRVDGDIHDISETFELNKNQQHTIEIVIDRIVVKSGDRSRLFDSFEAALRLSGGYAIADVIGGEPIMFSEHYACPICGFTVGELEPRLFSFNAPQGACPDCEGLGIKLEVDEDLVVPDKSLTLAEGALAPWNPISSQYYPEMLKQACEQLEIPMDVPYEDLSKADQQTVLYGSNGKTFHFHYQNDFGGVRDVDAVFEGVINNVDRRYHETNSDFTRDVMRKYMTELTCQTCHGFRLNRKALSVKVGGEHIGMVSDLAIGKELDFFNELSLSEQSLVIAKPILKEIRDRLSFLQNVGLAYLTLSRSARTLSGGEAQRIRLATQIGSNLSGVLYILDEPSIGLHQRDNDRLIGSLKKMRDLGNTLIVVEHDEDTMRAADYIVDIGPGAGENGGEVMAAGTPKQVARSRKSLTGQYLSGKRFIPLPETRRPGNGKKIRITGAAENNLKQIDVDFPLGEFVVVTGVSGSGKSTLVNDVLKRVLAQKLNRNSEKPGKYKSVSGIKNIERLVNIDQSPIGRTPRSNPATYTGVFDNIRDLFAQTNEAKLRGYKKGRFSFNTKGGRCEACHGDGILKIEMNFLPDVFVPCEVCHGKQYNSETLEVEYKGKNIADVLQMTASEAVKFFEPIPKIRRKLQTLVDVGLGYVKLGQPATTLSGGEAQRMKLASELHKQQSGKNFYILDEPTTGLHSEDIRRLIGVLDRLVDAGNTVLIIEHNLDVVKSADYLIDLGPEGGDGGGTIVATGTPEQVAEVAESYTGQYLKPVLERDRAREATAPAK.

Residue 33–40 coordinates ATP; sequence GLSGSGKS. The C4-type zinc finger occupies 252 to 279; it reads CPICGFTVGELEPRLFSFNAPQGACPDC. 2 consecutive ABC transporter domains span residues 309–587 and 607–935; these read WNPI…RKSL and GNGK…QYLK. Position 639 to 646 (639 to 646) interacts with ATP; the sequence is GVSGSGKS. A C4-type zinc finger spans residues 738 to 764; sequence CEACHGDGILKIEMNFLPDVFVPCEVC.

The protein belongs to the ABC transporter superfamily. UvrA family. As to quaternary structure, forms a heterotetramer with UvrB during the search for lesions.

Its subcellular location is the cytoplasm. Its function is as follows. The UvrABC repair system catalyzes the recognition and processing of DNA lesions. UvrA is an ATPase and a DNA-binding protein. A damage recognition complex composed of 2 UvrA and 2 UvrB subunits scans DNA for abnormalities. When the presence of a lesion has been verified by UvrB, the UvrA molecules dissociate. This is UvrABC system protein A from Lactiplantibacillus plantarum (strain ATCC BAA-793 / NCIMB 8826 / WCFS1) (Lactobacillus plantarum).